Here is a 56-residue protein sequence, read N- to C-terminus: Large ribosomal subunit protein bL32c (56 aa).

Belongs to the bacterial ribosomal protein bL32 family.

It is found in the plastid. The protein resides in the chloroplast. The polypeptide is Large ribosomal subunit protein bL32c (Platanus occidentalis (Sycamore)).